The chain runs to 96 residues: Protein Vpr (96 aa).

Residues 1–42 are homooligomerization; sequence MEQAPEDQGPPREPYQEWALETLEELKNEAVRHFPRPWLHQL. Phosphoserine; by host occurs at positions 79 and 96.

This sequence belongs to the HIV-1 VPR protein family. Homooligomer, may form homodimer. Interacts with p6-gag region of the Pr55 Gag precursor protein through a (Leu-X-X)4 motif near the C-terminus of the P6gag protein. Interacts with host UNG. May interact with host RAD23A/HHR23A. Interacts with host VPRBP/DCAF1, leading to hijack the CUL4A-RBX1-DDB1-DCAF1/VPRBP complex, mediating ubiquitination of host proteins such as TERT and ZGPAT and arrest of the cell cycle in G2 phase. Post-translationally, phosphorylated on several residues by host. These phosphorylations regulate VPR activity for the nuclear import of the HIV-1 pre-integration complex.

The protein localises to the virion. It is found in the host nucleus. The protein resides in the host extracellular space. In terms of biological role, during virus replication, may deplete host UNG protein, and incude G2-M cell cycle arrest. Acts by targeting specific host proteins for degradation by the 26S proteasome, through association with the cellular CUL4A-DDB1 E3 ligase complex by direct interaction with host VPRPB/DCAF-1. Cell cycle arrest reportedly occurs within hours of infection and is not blocked by antiviral agents, suggesting that it is initiated by the VPR carried into the virion. Additionally, VPR induces apoptosis in a cell cycle dependent manner suggesting that these two effects are mechanistically linked. Detected in the serum and cerebrospinal fluid of AIDS patient, VPR may also induce cell death to bystander cells. Its function is as follows. During virus entry, plays a role in the transport of the viral pre-integration (PIC) complex to the host nucleus. This function is crucial for viral infection of non-dividing macrophages. May act directly at the nuclear pore complex, by binding nucleoporins phenylalanine-glycine (FG)-repeat regions. The protein is Protein Vpr of Pan (chimpanzees).